The sequence spans 192 residues: Orotate phosphoribosyltransferase (192 aa).

Residues R84, K88, and 110–118 each bind 5-phospho-alpha-D-ribose 1-diphosphate; that span reads DDVLTTGNS. Orotate-binding residues include T114 and R142.

This sequence belongs to the purine/pyrimidine phosphoribosyltransferase family. PyrE subfamily. Homodimer. It depends on Mg(2+) as a cofactor.

It catalyses the reaction orotidine 5'-phosphate + diphosphate = orotate + 5-phospho-alpha-D-ribose 1-diphosphate. It functions in the pathway pyrimidine metabolism; UMP biosynthesis via de novo pathway; UMP from orotate: step 1/2. Its function is as follows. Catalyzes the transfer of a ribosyl phosphate group from 5-phosphoribose 1-diphosphate to orotate, leading to the formation of orotidine monophosphate (OMP). This Pyrobaculum calidifontis (strain DSM 21063 / JCM 11548 / VA1) protein is Orotate phosphoribosyltransferase.